Consider the following 276-residue polypeptide: Glutathione S-transferase-like protein ustS (276 aa).

One can recognise a GST N-terminal domain in the interval 16–109 (STLPGTSKSW…HLDETYPDPP (94 aa)).

Belongs to the GST superfamily.

The protein operates within mycotoxin biosynthesis. In terms of biological role, glutathione S-transferase-like protein; part of the gene cluster that mediates the biosynthesis of the secondary metabolite ustiloxin B, an antimitotic tetrapeptide. First, ustA is processed by the subtilisin-like endoprotease Kex2 that is outside the ustiloxin B gene cluster, at the C-terminal side of Arg-Lys, after transfer to Golgi apparatus through the endoplasmic reticulum (ER). Cleavage by KEX2 generates 16 peptides YAIG-I to YAIG-XVI. To process the precursor peptide further, at least two peptidases are necessary to cleave the N-terminal and C-terminal sides of the Tyr-Ala-Ile-Gly core peptide which serves as backbone for the synthesis of ustiloxin B, through cyclization and modification of the tyrosine with a non-protein coding amino acid, norvaline. One of the two peptidases must be the serine peptidase ustP; and the other pepdidase is probably ustH. Macrocyclization of the core peptide derived from ustA requires the tyrosinase ustQ, as well as the homologous oxidases ustYa and ustYb, and leads to the production of the first cyclization product N-desmethylustiloxin F. For the formation of N-desmethylustiloxin F, three oxidation steps are required, hydroxylation at the benzylic position, hydroxylation at either the aromatic ring of Tyr or beta-position of Ile, and oxidative cyclization. UstQ may catalyze the oxidation of a phenol moiety, whereas the ustYa and ustYb are most likely responsible for the remaining two-step oxidations. N-desmethylustiloxin F is then methylated by ustM to yield ustiloxin F which in turn substrate of the cytochrome P450 monooxygenase ustC which catalyzes the formation of S-deoxyustiloxin H. The flavoprotein monooxygenases ustF1 and ustF2 then participate in the modification of the side chain of S-deoxyustiloxin H, leading to the synthesis of an oxime intermediate, via ustiloxin H. Finally, carboxylative dehydration performed by the cysteine desulfurase-like protein ustD yields ustiloxin B. This Aspergillus flavus (strain ATCC 200026 / FGSC A1120 / IAM 13836 / NRRL 3357 / JCM 12722 / SRRC 167) protein is Glutathione S-transferase-like protein ustS.